Here is a 153-residue protein sequence, read N- to C-terminus: Myoglobin (153 aa).

Residues 1–147 (MATACVKSLE…FSDECLDHLK (147 aa)) form the Globin domain. His94 contacts heme b.

This sequence belongs to the globin family. Homodimer; disulfide-linked. In terms of processing, the N-terminus is blocked. Body wall globin is localized in cellular compartments belonging to the hypodermis, the dorsal, ventral and lateral cords, the nerve ring, and body wall muscle.

The protein resides in the cytoplasm. Functionally, high oxygen affinity. Probably supplies oxygen needed for muscle activity. The polypeptide is Myoglobin (Ascaris suum (Pig roundworm)).